We begin with the raw amino-acid sequence, 20 residues long: Dermaseptin-N1 (20 aa).

Leu-20 carries the post-translational modification Leucine amide.

Expressed by the skin glands.

The protein resides in the secreted. Antimicrobial peptide with moderate activity against both Gram-positive and Gram-negative bacteria, and important activity against Leishmania species (L.amazonensis and L.infantum). Acts on both Leishmania promastigote and amastigote forms. Shows activity against E.coli (MIC=17.8 uM), S.aureus (MIC=32.3 uM) and the phytopathogenic bacterium Xanthomonas axonopodis (MIC=2 uM). Shows low cytotoxicity against mammalian cells in models of peritoneal macrophages. This is Dermaseptin-N1 from Pithecopus nordestinus (Northeastern Brazilian leaf frog).